Here is a 390-residue protein sequence, read N- to C-terminus: 4-hydroxy-3-methylbut-2-en-1-yl diphosphate synthase (flavodoxin) (390 aa).

4 residues coordinate [4Fe-4S] cluster: Cys281, Cys284, Cys316, and Glu323.

This sequence belongs to the IspG family. [4Fe-4S] cluster serves as cofactor.

The catalysed reaction is (2E)-4-hydroxy-3-methylbut-2-enyl diphosphate + oxidized [flavodoxin] + H2O + 2 H(+) = 2-C-methyl-D-erythritol 2,4-cyclic diphosphate + reduced [flavodoxin]. It participates in isoprenoid biosynthesis; isopentenyl diphosphate biosynthesis via DXP pathway; isopentenyl diphosphate from 1-deoxy-D-xylulose 5-phosphate: step 5/6. In terms of biological role, converts 2C-methyl-D-erythritol 2,4-cyclodiphosphate (ME-2,4cPP) into 1-hydroxy-2-methyl-2-(E)-butenyl 4-diphosphate. This chain is 4-hydroxy-3-methylbut-2-en-1-yl diphosphate synthase (flavodoxin), found in Salinispora arenicola (strain CNS-205).